The following is a 198-amino-acid chain: NADH-quinone oxidoreductase subunit C (198 aa).

This sequence belongs to the complex I 30 kDa subunit family. In terms of assembly, NDH-1 is composed of 14 different subunits. Subunits NuoB, C, D, E, F, and G constitute the peripheral sector of the complex.

It localises to the cell inner membrane. The catalysed reaction is a quinone + NADH + 5 H(+)(in) = a quinol + NAD(+) + 4 H(+)(out). Its function is as follows. NDH-1 shuttles electrons from NADH, via FMN and iron-sulfur (Fe-S) centers, to quinones in the respiratory chain. The immediate electron acceptor for the enzyme in this species is believed to be ubiquinone. Couples the redox reaction to proton translocation (for every two electrons transferred, four hydrogen ions are translocated across the cytoplasmic membrane), and thus conserves the redox energy in a proton gradient. The polypeptide is NADH-quinone oxidoreductase subunit C (Herminiimonas arsenicoxydans).